A 592-amino-acid chain; its full sequence is Aspartate--tRNA(Asp/Asn) ligase (592 aa).

Glutamate 182 is an L-aspartate binding site. The interval 206 to 209 (QIFK) is aspartate. Arginine 228 is a binding site for L-aspartate. ATP is bound by residues 228-230 (RDE) and glutamine 237. An L-aspartate-binding site is contributed by histidine 455. Glutamate 489 is a binding site for ATP. Arginine 496 is an L-aspartate binding site. 541 to 544 (GLDR) contacts ATP.

This sequence belongs to the class-II aminoacyl-tRNA synthetase family. Type 1 subfamily. In terms of assembly, homodimer.

It localises to the cytoplasm. It carries out the reaction tRNA(Asx) + L-aspartate + ATP = L-aspartyl-tRNA(Asx) + AMP + diphosphate. In terms of biological role, aspartyl-tRNA synthetase with relaxed tRNA specificity since it is able to aspartylate not only its cognate tRNA(Asp) but also tRNA(Asn). Reaction proceeds in two steps: L-aspartate is first activated by ATP to form Asp-AMP and then transferred to the acceptor end of tRNA(Asp/Asn). The sequence is that of Aspartate--tRNA(Asp/Asn) ligase from Thermoanaerobacter sp. (strain X514).